The following is a 108-amino-acid chain: uncharacterized protein (108 aa).

3 helical membrane passes run 24-44 (LWIT…GGLL), 55-75 (AHMA…YLAM), and 88-108 (RFEI…SIGI).

To cation A.eutrophus efflux system protein CzcD.

Its subcellular location is the cell membrane. This is an uncharacterized protein from Geobacillus stearothermophilus (Bacillus stearothermophilus).